The chain runs to 249 residues: Aquaporin SIP2-1 (249 aa).

Transmembrane regions (helical) follow at residues 12 to 32 (PWLV…GALV) and 53 to 73 (VSLS…SGGA). The NPA 1 motif lies at 76–78 (NPL). 4 consecutive transmembrane segments (helical) span residues 104–124 (AQVI…PNVG), 133–155 (AHHG…VTLK), 176–196 (IHLL…AFAW), and 210–230 (LVYW…VTFF). An NPA 2 motif is present at residues 189–191 (NPA).

The protein belongs to the MIP/aquaporin (TC 1.A.8) family. SIP (TC 1.A.8.10) subfamily.

The protein resides in the membrane. Functionally, aquaporins facilitate the transport of water and small neutral solutes across cell membranes. The chain is Aquaporin SIP2-1 (SIP2-1) from Zea mays (Maize).